The following is a 692-amino-acid chain: Elongation factor G (692 aa).

Residues 8–283 enclose the tr-type G domain; that stretch reads EKVRNIGIAA…AVVDYLPAPT (276 aa). GTP contacts are provided by residues 17-24, 81-85, and 135-138; these read AHIDAGKT, DTPGH, and NKMD.

The protein belongs to the TRAFAC class translation factor GTPase superfamily. Classic translation factor GTPase family. EF-G/EF-2 subfamily.

The protein localises to the cytoplasm. Catalyzes the GTP-dependent ribosomal translocation step during translation elongation. During this step, the ribosome changes from the pre-translocational (PRE) to the post-translocational (POST) state as the newly formed A-site-bound peptidyl-tRNA and P-site-bound deacylated tRNA move to the P and E sites, respectively. Catalyzes the coordinated movement of the two tRNA molecules, the mRNA and conformational changes in the ribosome. The protein is Elongation factor G of Nitratiruptor sp. (strain SB155-2).